Here is a 507-residue protein sequence, read N- to C-terminus: Probable cytochrome P450 6a18 (507 aa).

C451 is a binding site for heme.

The protein belongs to the cytochrome P450 family. It depends on heme as a cofactor.

It localises to the endoplasmic reticulum membrane. The protein resides in the microsome membrane. Functionally, may be involved in the metabolism of insect hormones and in the breakdown of synthetic insecticides. The protein is Probable cytochrome P450 6a18 (Cyp6a18) of Drosophila melanogaster (Fruit fly).